The sequence spans 436 residues: Trigger factor (436 aa).

The region spanning 163–248 is the PPIase FKBP-type domain; that stretch reads GDRVTVDFEG…VKKIEAAHLP (86 aa).

It belongs to the FKBP-type PPIase family. Tig subfamily.

Its subcellular location is the cytoplasm. The catalysed reaction is [protein]-peptidylproline (omega=180) = [protein]-peptidylproline (omega=0). In terms of biological role, involved in protein export. Acts as a chaperone by maintaining the newly synthesized protein in an open conformation. Functions as a peptidyl-prolyl cis-trans isomerase. This is Trigger factor from Acidovorax ebreus (strain TPSY) (Diaphorobacter sp. (strain TPSY)).